A 295-amino-acid polypeptide reads, in one-letter code: 33 kDa chaperonin (295 aa).

Cystine bridges form between Cys238–Cys240 and Cys271–Cys274.

This sequence belongs to the HSP33 family. Post-translationally, under oxidizing conditions two disulfide bonds are formed involving the reactive cysteines. Under reducing conditions zinc is bound to the reactive cysteines and the protein is inactive.

It localises to the cytoplasm. Its function is as follows. Redox regulated molecular chaperone. Protects both thermally unfolding and oxidatively damaged proteins from irreversible aggregation. Plays an important role in the bacterial defense system toward oxidative stress. The protein is 33 kDa chaperonin of Levilactobacillus brevis (strain ATCC 367 / BCRC 12310 / CIP 105137 / JCM 1170 / LMG 11437 / NCIMB 947 / NCTC 947) (Lactobacillus brevis).